Reading from the N-terminus, the 327-residue chain is Small ribosomal subunit protein uS4m (327 aa).

Residues 96-154 (SRLDMSIHRALFASSALQARQLVLHGKVHVNGKPERRAYRQLLPGDLVTVDQKSVMNCV) form the S4 RNA-binding domain. The segment covering 156-173 (ASSNNTPSIQDGKQTEQV) has biased composition (polar residues). The disordered stretch occupies residues 156–199 (ASSNNTPSIQDGKQTEQVSSKDGENEKKKDNDDDLFEQTSNGKL). Basic and acidic residues predominate over residues 174 to 186 (SSKDGENEKKKDN).

This sequence belongs to the universal ribosomal protein uS4 family. As to quaternary structure, component of the mitochondrial small ribosomal subunit (mt-SSU). Mature yeast 74S mitochondrial ribosomes consist of a small (37S) and a large (54S) subunit. The 37S small subunit contains a 15S ribosomal RNA (15S mt-rRNA) and at least 32 different proteins. The 54S large subunit contains a 21S rRNA (21S mt-rRNA) and at least 45 different proteins. uS3m, uS4m and uS5m form the narrow entry site of the mRNA channel.

The protein resides in the mitochondrion. Component of the mitochondrial ribosome (mitoribosome), a dedicated translation machinery responsible for the synthesis of mitochondrial genome-encoded proteins, including at least some of the essential transmembrane subunits of the mitochondrial respiratory chain. The mitoribosomes are attached to the mitochondrial inner membrane and translation products are cotranslationally integrated into the membrane. The chain is Small ribosomal subunit protein uS4m (nam9) from Schizosaccharomyces pombe (strain 972 / ATCC 24843) (Fission yeast).